The sequence spans 442 residues: tRNA pseudouridine(38/39) synthase (442 aa).

Asp151 acts as the Nucleophile in catalysis. Tyr222 serves as a coordination point for substrate.

It belongs to the tRNA pseudouridine synthase TruA family.

The protein resides in the nucleus. The enzyme catalyses uridine(38/39) in tRNA = pseudouridine(38/39) in tRNA. In terms of biological role, formation of pseudouridines at positions 38 and 39 in the anticodon stem and loop of transfer RNAs. The sequence is that of tRNA pseudouridine(38/39) synthase (DEG1) from Saccharomyces cerevisiae (strain ATCC 204508 / S288c) (Baker's yeast).